Reading from the N-terminus, the 340-residue chain is Galactoside alpha-(1,2)-fucosyltransferase 2 (340 aa).

At 1–7 (MLSMQAS) the chain is on the cytoplasmic side. A helical; Signal-anchor for type II membrane protein membrane pass occupies residues 8–28 (FFFPTGPFILFVFTASTIFHL). Residues 29 to 340 (QQRMVKIQPT…EADLSPLLKH (312 aa)) lie on the Lumenal side of the membrane. Residues Asn185, Asn251, Asn279, and Asn305 are each glycosylated (N-linked (GlcNAc...) asparagine).

It localises to the golgi apparatus. The protein resides in the golgi stack membrane. It carries out the reaction a beta-D-galactosyl-(1-&gt;3)-N-acetyl-beta-D-glucosaminyl derivative + GDP-beta-L-fucose = an alpha-L-Fuc-(1-&gt;2)-beta-D-Gal-(1-&gt;3)-beta-D-GlcNAc derivative + GDP + H(+). The enzyme catalyses a beta-D-galactosyl-(1-&gt;4)-N-acetyl-beta-D-glucosaminyl derivative + GDP-beta-L-fucose = an alpha-L-Fuc-(1-&gt;2)-beta-D-Gal-(1-&gt;4)-beta-D-GlcNAc derivative + GDP + H(+). It catalyses the reaction a neolactoside nLc4Cer + GDP-beta-L-fucose = a neolactoside IV(2)-alpha-Fuc-nLc4Cer + GDP + H(+). The catalysed reaction is a neolactoside nLc4Cer(d18:1(4E)) + GDP-beta-L-fucose = a neolactoside IV(2)-alpha-Fuc-nLc4Cer(d18:1(4E)) + GDP + H(+). It carries out the reaction a ganglioside GM1 + GDP-beta-L-fucose = a ganglioside Fuc-GM1 + GDP + H(+). The enzyme catalyses a ganglioside GA1 + GDP-beta-L-fucose = a ganglioside Fuc-GA1 + GDP + H(+). It catalyses the reaction Lc4Cer + GDP-beta-L-fucose = alpha-L-fucosyl-(1-&gt;2)-beta-D-galactosyl-(1-&gt;3)-N-acetyl-beta-D-glucosaminyl-(1-&gt;3)-beta-D-galactosyl-(1-&gt;4)-beta-D-glucosyl-(1&lt;-&gt;1')-ceramide + GDP + H(+). The catalysed reaction is a beta-D-Gal-(1-&gt;3)-beta-D-GlcNAc-(1-&gt;3)-beta-D-Gal-(1-&gt;4)-beta-D-Glc-(1&lt;-&gt;1')-Cer(d18:1(4E)) + GDP-beta-L-fucose = alpha-L-fucosyl-(1-&gt;2)- beta-D-galactosyl-(1-&gt;3)-N-acetyl-beta-D-glucosaminyl-(1-&gt;3)-beta-D-galactosyl-(1-&gt;4)-beta-D-glucosyl-(1&lt;-&gt;1')-N-acylsphing-4-enine + GDP + H(+). It carries out the reaction a ganglioside GD1b + GDP-beta-L-fucose = a ganglioside Fuc-GD1b + GDP + H(+). The enzyme catalyses a ganglioside GM1 (d18:1(4E)) + GDP-beta-L-fucose = a ganglioside Fuc-GM1 (d18:1(4E)) + GDP + H(+). It catalyses the reaction a globoside GalGb4Cer (d18:1(4E)) + GDP-beta-L-fucose = a globoside Globo-H (d18:1(4E)) + GDP + H(+). The catalysed reaction is a lactoside III(4)-a-Fuc-Lc4Cer + GDP-beta-L-fucose = a lactoside IV(2),III(4)-a-[Fuc]2-Lc4Cer + GDP + H(+). It carries out the reaction beta-D-galactosyl-(1-&gt;3)-N-acetyl-D-galactosamine + GDP-beta-L-fucose = alpha-L-fucosyl-(1-&gt;2)-beta-D-galactosyl-(1-&gt;3)-N-acetyl-D-galactosamine + GDP + H(+). It participates in protein modification; protein glycosylation. In terms of biological role, catalyzes the transfer of L-fucose, from a guanosine diphosphate-beta-L-fucose, to the terminal galactose on both O- and N-linked glycans chains of cell surface glycoproteins and glycolipids and the resulting epitope regulates several processes such as cell-cell interaction including host-microbe interaction, cell surface expression and cell proliferation. Preferentially fucosylates gangliosides GA1 and GM1 in the antrum, cecum and colon and in the female reproductive organs. Fucosylated host glycoproteins or glycolipids mediate interaction with intestinal microbiota influencing its composition. Creates a soluble precursor oligosaccharide FuC-alpha ((1,2)Galbeta-) called the H antigen which is an essential substrate for the final step in the soluble ABO blood group antigen synthesis pathway. The chain is Galactoside alpha-(1,2)-fucosyltransferase 2 from Sus scrofa (Pig).